The sequence spans 555 residues: Dihydroxy-acid dehydratase (555 aa).

D78 provides a ligand contact to Mg(2+). C119 provides a ligand contact to [2Fe-2S] cluster. Residues D120 and K121 each contribute to the Mg(2+) site. An N6-carboxylysine modification is found at K121. C192 is a [2Fe-2S] cluster binding site. E444 contributes to the Mg(2+) binding site. Catalysis depends on S470, which acts as the Proton acceptor.

It belongs to the IlvD/Edd family. In terms of assembly, homodimer. [2Fe-2S] cluster serves as cofactor. It depends on Mg(2+) as a cofactor.

The catalysed reaction is (2R)-2,3-dihydroxy-3-methylbutanoate = 3-methyl-2-oxobutanoate + H2O. It catalyses the reaction (2R,3R)-2,3-dihydroxy-3-methylpentanoate = (S)-3-methyl-2-oxopentanoate + H2O. Its pathway is amino-acid biosynthesis; L-isoleucine biosynthesis; L-isoleucine from 2-oxobutanoate: step 3/4. The protein operates within amino-acid biosynthesis; L-valine biosynthesis; L-valine from pyruvate: step 3/4. In terms of biological role, functions in the biosynthesis of branched-chain amino acids. Catalyzes the dehydration of (2R,3R)-2,3-dihydroxy-3-methylpentanoate (2,3-dihydroxy-3-methylvalerate) into 2-oxo-3-methylpentanoate (2-oxo-3-methylvalerate) and of (2R)-2,3-dihydroxy-3-methylbutanoate (2,3-dihydroxyisovalerate) into 2-oxo-3-methylbutanoate (2-oxoisovalerate), the penultimate precursor to L-isoleucine and L-valine, respectively. The polypeptide is Dihydroxy-acid dehydratase (Halalkalibacterium halodurans (strain ATCC BAA-125 / DSM 18197 / FERM 7344 / JCM 9153 / C-125) (Bacillus halodurans)).